A 125-amino-acid chain; its full sequence is Large ribosomal subunit protein bL12 (125 aa).

It belongs to the bacterial ribosomal protein bL12 family. Homodimer. Part of the ribosomal stalk of the 50S ribosomal subunit. Forms a multimeric L10(L12)X complex, where L10 forms an elongated spine to which 2 to 4 L12 dimers bind in a sequential fashion. Binds GTP-bound translation factors.

Its function is as follows. Forms part of the ribosomal stalk which helps the ribosome interact with GTP-bound translation factors. Is thus essential for accurate translation. This Azoarcus sp. (strain BH72) protein is Large ribosomal subunit protein bL12.